The chain runs to 325 residues: Acetyl-coenzyme A carboxylase carboxyl transferase subunit alpha (325 aa).

Residues 38 to 292 (RLEDRLAKLQ…DETLKQSLKT (255 aa)) form the CoA carboxyltransferase C-terminal domain.

Belongs to the AccA family. Acetyl-CoA carboxylase is a heterohexamer composed of biotin carboxyl carrier protein (AccB), biotin carboxylase (AccC) and two subunits each of ACCase subunit alpha (AccA) and ACCase subunit beta (AccD).

It localises to the cytoplasm. It catalyses the reaction N(6)-carboxybiotinyl-L-lysyl-[protein] + acetyl-CoA = N(6)-biotinyl-L-lysyl-[protein] + malonyl-CoA. It participates in lipid metabolism; malonyl-CoA biosynthesis; malonyl-CoA from acetyl-CoA: step 1/1. Inhibited by pyrrolidine dione antibiotics moiramide B (CPD1) and CPD2. Component of the acetyl coenzyme A carboxylase (ACC) complex. First, biotin carboxylase catalyzes the carboxylation of biotin on its carrier protein (BCCP) and then the CO(2) group is transferred by the carboxyltransferase to acetyl-CoA to form malonyl-CoA. In Bacillus subtilis (strain 168), this protein is Acetyl-coenzyme A carboxylase carboxyl transferase subunit alpha.